The sequence spans 225 residues: 7-carboxy-7-deazaguanine synthase (225 aa).

Residues 14–16 and Arg-29 each bind substrate; that span reads LQG. Residues 20-225 enclose the Radical SAM core domain; sequence HFGKSAFFIR…LQTHKWLGVL (206 aa). [4Fe-4S] cluster-binding residues include Cys-33, Cys-37, and Cys-40. A Mg(2+)-binding site is contributed by Thr-42. Thr-77 is a substrate binding site. S-adenosyl-L-methionine is bound by residues Gly-79 and 127-129; that span reads SPK.

The protein belongs to the radical SAM superfamily. 7-carboxy-7-deazaguanine synthase family. Homodimer. [4Fe-4S] cluster serves as cofactor. Requires S-adenosyl-L-methionine as cofactor. It depends on Mg(2+) as a cofactor.

The catalysed reaction is 6-carboxy-5,6,7,8-tetrahydropterin + H(+) = 7-carboxy-7-deazaguanine + NH4(+). The protein operates within purine metabolism; 7-cyano-7-deazaguanine biosynthesis. Catalyzes the complex heterocyclic radical-mediated conversion of 6-carboxy-5,6,7,8-tetrahydropterin (CPH4) to 7-carboxy-7-deazaguanine (CDG), a step common to the biosynthetic pathways of all 7-deazapurine-containing compounds. This chain is 7-carboxy-7-deazaguanine synthase, found in Prochlorococcus marinus (strain SARG / CCMP1375 / SS120).